A 443-amino-acid chain; its full sequence is Cobyrinate a,c-diamide synthase (443 aa).

Residues 248 to 433 (KIAVAYDKAF…LHNHAVANPY (186 aa)) enclose the GATase cobBQ-type domain. Catalysis depends on cysteine 327, which acts as the Nucleophile.

The protein belongs to the CobB/CbiA family. Mg(2+) is required as a cofactor.

The enzyme catalyses cob(II)yrinate + 2 L-glutamine + 2 ATP + 2 H2O = cob(II)yrinate a,c diamide + 2 L-glutamate + 2 ADP + 2 phosphate + 2 H(+). It catalyses the reaction Ni-sirohydrochlorin + 2 L-glutamine + 2 ATP + 2 H2O = Ni-sirohydrochlorin a,c-diamide + 2 L-glutamate + 2 ADP + 2 phosphate + 2 H(+). Its pathway is cofactor biosynthesis; adenosylcobalamin biosynthesis; cob(II)yrinate a,c-diamide from sirohydrochlorin (anaerobic route): step 10/10. Catalyzes the ATP-dependent amidation of the two carboxylate groups at positions a and c of cobyrinate, using either L-glutamine or ammonia as the nitrogen source. Involved in the biosynthesis of the unique nickel-containing tetrapyrrole coenzyme F430, the prosthetic group of methyl-coenzyme M reductase (MCR), which plays a key role in methanogenesis and anaerobic methane oxidation. Catalyzes the ATP-dependent amidation of the two carboxylate groups at positions a and c of Ni-sirohydrochlorin, using L-glutamine or ammonia as the nitrogen source. The sequence is that of Cobyrinate a,c-diamide synthase from Methanocaldococcus jannaschii (strain ATCC 43067 / DSM 2661 / JAL-1 / JCM 10045 / NBRC 100440) (Methanococcus jannaschii).